The following is a 493-amino-acid chain: Amphoterin-induced protein 1 (493 aa).

Positions 1 to 27 are cleaved as a signal peptide; that stretch reads MHPHRDPRGLWLLLPSLSLLLFEVARA. An LRRNT domain is found at 28-61; sequence GRAVVSCPAACLCASNILSCSKQQLPNVPHSLPS. The Extracellular portion of the chain corresponds to 28 to 372; it reads GRAVVSCPAA…LHGHHDTLNT (345 aa). 2 cysteine pairs are disulfide-bonded: Cys34-Cys40 and Cys38-Cys47. LRR repeat units lie at residues 62 to 83, 87 to 108, 111 to 132, 135 to 156, 159 to 179, and 186 to 206; these read YTALLDLSHNNLSRLRAEWTPT, QLHSLLLSHNHLNFISSEAFSP, NLRYLDLSSNQLRTLDEFLFSD, VLEVLLLYNNHIMAVDRCAFDD, QLQKLYLSQNQISRFPLELVK, and KLTLLDLSSNKLKNLPLPDLQ. N-linked (GlcNAc...) asparagine glycosylation occurs at Asn72. The LRRCT domain maps to 221–272; the sequence is NPLNCDCELYQLFSHWQYRQLSSVMDFQEDLYCMNSKKLHNVFNLSFLNCGE. Disulfide bonds link Cys225–Cys253, Cys227–Cys270, and Cys290–Cys341. Asn264, Asn315, Asn349, and Asn360 each carry an N-linked (GlcNAc...) asparagine glycan. The Ig-like C2-type domain occupies 269–353; it reads NCGEYKERAW…MGETFNETLS (85 aa). Residues 373 to 393 traverse the membrane as a helical segment; sequence AYTTLVGCILSVVLVLIYLYL. Residues 394–493 are Cytoplasmic-facing; sequence TPCRCWCRGV…SVFSDTPIVV (100 aa). A disordered region spans residues 405–493; sequence KPSSHQGDSL…SVFSDTPIVV (89 aa). The segment covering 408–424 has biased composition (polar residues); the sequence is SHQGDSLSSSMLSTTPN. The segment covering 431–442 has biased composition (basic and acidic residues); the sequence is GDKDDGFDRRVA. Residues Ser477 and Ser481 each carry the phosphoserine modification.

The protein belongs to the immunoglobulin superfamily. AMIGO family. Homodimer, and heterodimer with AMIGO2 and AMIGO3. Interacts with KCNB1.

It localises to the cell membrane. It is found in the perikaryon. The protein localises to the cell projection. The protein resides in the dendrite. Its subcellular location is the axon. In terms of biological role, promotes growth and fasciculation of neurites from cultured hippocampal neurons. May be involved in fasciculation as well as myelination of developing neural axons. May have a role in regeneration as well as neural plasticity in the adult nervous system. May mediate homophilic as well as heterophilic cell-cell interaction and contribute to signal transduction through its intracellular domain. Assembled with KCNB1 modulates the gating characteristics of the delayed rectifier voltage-dependent potassium channel KCNB1. This is Amphoterin-induced protein 1 from Homo sapiens (Human).